The sequence spans 447 residues: Neuronal acetylcholine receptor subunit alpha-10 (447 aa).

Residues 1–24 (MGTRSHYLDLGFLLLLFLPAECLG) form the signal peptide. At 25–237 (AEGRLAHKLF…FTLLLRRRAA (213 aa)) the chain is on the extracellular side. Asparagine 40 and asparagine 56 each carry an N-linked (GlcNAc...) asparagine glycan. 2 disulfides stabilise this stretch: cysteine 154–cysteine 168 and cysteine 218–cysteine 219. 3 helical membrane passes run 238 to 258 (AYVC…PLAF), 268 to 288 (VSLG…LAES), and 302 to 322 (YMAT…IMNL). At 323-425 (HYCGPNAHPV…WKRLARVMDR (103 aa)) the chain is on the cytoplasmic side. Residues 426–446 (FFLGIFFCMALVMSLIVLVQA) traverse the membrane as a helical segment.

The protein belongs to the ligand-gated ion channel (TC 1.A.9) family. Acetylcholine receptor (TC 1.A.9.1) subfamily. Alpha-10/CHRNA10 sub-subfamily. In terms of assembly, forms homo- or heterooligomeric channels in conjunction with CHRNA10. The native outer hair cell receptor may be composed of CHRNA9:CHRNA10 heterooligomers. Found in the stoichiometric form (CHRNA9)2:(CHRNA10)3. Expressed in the outer hair cells of the cochlea and the neurons of dorsal root ganglia.

Its subcellular location is the synaptic cell membrane. The protein localises to the cell membrane. It catalyses the reaction Ca(2+)(in) = Ca(2+)(out). It carries out the reaction Mg(2+)(in) = Mg(2+)(out). The catalysed reaction is K(+)(in) = K(+)(out). The enzyme catalyses Na(+)(in) = Na(+)(out). With respect to regulation, activated by a myriad of ligands such as acetylcholine. AChR activity is inhibited by the antagonist alpha-conotoxins RgIA and GeXXA, small disulfide-constrained peptides from cone snails. Component of neuronal acetylcholine receptors (nAChRs) that function as pentameric, ligand-gated cation channels with high calcium permeability among other activities. nAChRs are excitatory neurotrasnmitter receptors formed by a collection of nAChR subunits known to mediate synaptic transmission in the nervous system and the neuromuscular junction. Each nAchR subunit confers differential attributes to channel properties, including activation, deactivation and desensitization kinetics, pH sensitivity, cation permeability, and binding to allosteric modulators. Forms heteropentamers with CHRNA9. Expressed in the inner ear, in sympathetic neurons and in other non-neuronal cells, such as skin keratinocytes and lymphocytes. nAChR formed by CHRNA9:CHRNA10 mediate central nervous system control of auditory and vestibular sensory processing. The channel is permeable to a range of divalent cations including calcium, the influx of which may activate a potassium current which hyperpolarizes the cell membrane. In the ear, mediates synaptic transmission between efferent olivocochlear fibers and hair cells of the cochlea, this may lead to a reduction in basilar membrane motion, altering the activity of auditory nerve fibers and reducing the range of dynamic hearing. This may protect against acoustic trauma. May also regulate keratinocyte adhesion. This chain is Neuronal acetylcholine receptor subunit alpha-10 (Chrna10), found in Rattus norvegicus (Rat).